The following is a 479-amino-acid chain: Bifunctional aspartate aminotransferase and glutamate/aspartate-prephenate aminotransferase (479 aa).

Residues 1-79 constitute a chloroplast transit peptide; that stretch reads MAATTTTSSS…VEVDISLSPR (79 aa). Gly111 lines the L-aspartate pocket. Residue 172–173 participates in pyridoxal 5'-phosphate binding; that stretch reads AK. Residues Trp197 and Asn247 each coordinate L-aspartate. Residues Asn247, Tyr279, and 307 to 309 contribute to the pyridoxal 5'-phosphate site; that span reads GFS. Lys310 bears the N6-(pyridoxal phosphate)lysine mark. Arg318 lines the pyridoxal 5'-phosphate pocket. Arg449 contributes to the L-aspartate binding site.

This sequence belongs to the class-I pyridoxal-phosphate-dependent aminotransferase family. In terms of assembly, homodimer. Pyridoxal 5'-phosphate is required as a cofactor. As to expression, expressed in flowers, pistils, stamens, ovaries and at lower levels in leaves and sepals.

The protein resides in the plastid. Its subcellular location is the chloroplast. The enzyme catalyses L-aspartate + 2-oxoglutarate = oxaloacetate + L-glutamate. It catalyses the reaction L-arogenate + oxaloacetate = prephenate + L-aspartate. It carries out the reaction L-arogenate + 2-oxoglutarate = prephenate + L-glutamate. It participates in amino-acid biosynthesis; L-phenylalanine biosynthesis; L-arogenate from prephenate (L-Asp route): step 1/1. It functions in the pathway amino-acid biosynthesis; L-phenylalanine biosynthesis; L-arogenate from prephenate (L-Glu route): step 1/1. In terms of biological role, prokaryotic-type aspartate aminotransferase. Also has a prenate transaminase activity. Involved in the aromatic amino acids biosynthesis pathway via the arogenate route. Required for the transamination of prephenate into arogenate. Can use 2-oxoglutarate, oxaloacetate and prephenate as substrates, but not phenylpyruvate or 4-hydroxyphenylpyruvate. This chain is Bifunctional aspartate aminotransferase and glutamate/aspartate-prephenate aminotransferase, found in Petunia hybrida (Petunia).